The primary structure comprises 130 residues: MKLAFLFLGPMALLLLAGYGCVLGASSGNLRTFVGCAVREFTFLAKKPGCRGLRITTDACWGRCETWEKPILEPPYIEAHHRVCTYNETKQVTVKLPNCAPGVDPFYTYPVAIRCDCGACSTATTECETI.

A signal peptide spans 1–24 (MKLAFLFLGPMALLLLAGYGCVLG). 5 disulfides stabilise this stretch: Cys-36-Cys-84, Cys-50-Cys-99, Cys-60-Cys-115, Cys-64-Cys-117, and Cys-120-Cys-127. Asn-87 carries an N-linked (GlcNAc...) asparagine glycan.

This sequence belongs to the glycoprotein hormones subunit beta family. Heterodimer with GPHA2; this heterodimer interacts with thyroid-stimulating hormone receptor (TSHR), and hence stimulates cAMP production. In terms of processing, N-glycosylated. As to expression, highly expressed in brain and at low levels in pituitary. Also found in retina, testis and skin but not in pancreas, parotid, kidney, stomach, liver, colon, small intestine, thyroid, brain or adrenal gland. In pituitary, colocalizes with ACTH, suggesting that it is located in corticotrophs.

It localises to the secreted. Functions as a heterodimeric glycoprotein hormone with GPHA2 able to bind and activate the thyroid-stimulating hormone receptor (TSHR), leading to increased cAMP production. Plays a central role in controlling thyroid cell metabolism. The sequence is that of Glycoprotein hormone beta-5 (GPHB5) from Homo sapiens (Human).